The sequence spans 144 residues: MTIVNILRVDIDQPFDYLDKQFYGNLTLRKLLVWRIFYVSKVFSQHVESLEFRKSLSGNIHVLVTINPGIQRTLVPLAQFLMGDDIMRTFMNLKRKGKGNYLFSYGNTDADRFLAERQIARKQKALNRKKSKTKNGEKNGEGKS.

Residues 124–133 are compositionally biased toward basic residues; the sequence is KALNRKKSKT. The segment at 124–144 is disordered; sequence KALNRKKSKTKNGEKNGEGKS. A compositionally biased stretch (basic and acidic residues) spans 134–144; that stretch reads KNGEKNGEGKS.

This is an uncharacterized protein from Acidianus filamentous virus 1 (isolate United States/Yellowstone) (AFV-1).